Reading from the N-terminus, the 728-residue chain is tRNA (guanine(27)-N(2))-dimethyltransferase (728 aa).

Positions 1–10 (MENMAEEELL) are enriched in acidic residues. Disordered stretches follow at residues 1-78 (MENM…SKRH) and 98-118 (DVDS…SQTC). Thr-23 is subject to Phosphothreonine. Over residues 23 to 33 (TPAPDSAPVPA) the composition is skewed to pro residues. Residues 34-46 (PAADTALDSAPTP) are compositionally biased toward low complexity. Pro residues predominate over residues 47–61 (DSDPAPALAPAPAPA). At Ser-63 the chain carries Phosphoserine. The segment covering 101 to 118 (SASSLNSDNPGTENSQTC) has biased composition (polar residues). The Nucleolar localization signal signature appears at 132–136 (HKLRR). The segment at 181–203 (YHCIICSATITRRTDMLGHVKRH) adopts a C2H2-type zinc-finger fold. A Trm1 methyltransferase domain is found at 224–683 (EILKETDTDI…APLMQFKSIL (460 aa)). Residues Arg-257, Asp-304, Asp-352, and Ala-353 each contribute to the S-adenosyl-L-methionine site. The Zn(2+) site is built by Cys-483, Cys-486, Cys-508, and Cys-510. Lys-580 participates in a covalent cross-link: Glycyl lysine isopeptide (Lys-Gly) (interchain with G-Cter in SUMO2). The residue at position 607 (Ser-607) is a Phosphoserine. Residues 693–728 (GAQSEGQMPPAAEDTVTDRVEMSVSDKAEASGCRRW) are disordered. Basic and acidic residues predominate over residues 708–721 (VTDRVEMSVSDKAE).

This sequence belongs to the class I-like SAM-binding methyltransferase superfamily. Trm1 family. As to expression, expressed in various neuronal structures during embryonic development, including spinal ganglia, trigeminal nerve and ganglion, olfactory and nasopharyngeal epithelium, nuclei of the metencephalon, thalamus and medulla oblongata. Also expressed in lung, esophagus, epiglottis, ependyma, vertebral column, spinal cord and brown adipose tissue. Expression persists in the adult brain with dynamically changing patterns in cortex and cerebellum.

The protein resides in the nucleus. Its subcellular location is the nucleolus. It carries out the reaction guanosine(27) in tRNA(Tyr) + 2 S-adenosyl-L-methionine = N(2)-dimethylguanosine(27) in tRNA(Tyr) + 2 S-adenosyl-L-homocysteine + 2 H(+). Functionally, specifically dimethylates a single guanine residue at position 27 of tRNA(Tyr) using S-adenosyl-L-methionine as donor of the methyl groups. Dimethylation at position 27 of tRNA(Tyr) is required for efficient translation of tyrosine codons. Also required to maintain 3-(3-amino-3-carboxypropyl)uridine (acp3U) in the D-loop of several cytoplasmic tRNAs. May play a role in motor coordination and exploratory behavior. This is tRNA (guanine(27)-N(2))-dimethyltransferase from Mus musculus (Mouse).